A 206-amino-acid polypeptide reads, in one-letter code: Thymidylate kinase (206 aa).

7–14 is an ATP binding site; the sequence is GGEGVGKT.

Belongs to the thymidylate kinase family.

The catalysed reaction is dTMP + ATP = dTDP + ADP. Its function is as follows. Phosphorylation of dTMP to form dTDP in both de novo and salvage pathways of dTTP synthesis. The chain is Thymidylate kinase from Synechococcus sp. (strain JA-2-3B'a(2-13)) (Cyanobacteria bacterium Yellowstone B-Prime).